We begin with the raw amino-acid sequence, 524 residues long: Peptide chain release factor 3 (524 aa).

The region spanning 8–276 is the tr-type G domain; it reads NKRRTFAIIS…GFAKYAPAPE (269 aa). Residues 17 to 24, 85 to 89, and 139 to 142 each bind GTP; these read SHPDAGKT, DTPGH, and NKLD.

This sequence belongs to the TRAFAC class translation factor GTPase superfamily. Classic translation factor GTPase family. PrfC subfamily.

The protein resides in the cytoplasm. Functionally, increases the formation of ribosomal termination complexes and stimulates activities of RF-1 and RF-2. It binds guanine nucleotides and has strong preference for UGA stop codons. It may interact directly with the ribosome. The stimulation of RF-1 and RF-2 is significantly reduced by GTP and GDP, but not by GMP. This Hydrogenovibrio crunogenus (strain DSM 25203 / XCL-2) (Thiomicrospira crunogena) protein is Peptide chain release factor 3.